Here is a 218-residue protein sequence, read N- to C-terminus: Keratin-associated protein 10-8 (218 aa).

Residues 26 to 202 form a 16 X 5 AA repeats of C-C-X(3) region; the sequence is CGNQVSSPSA…FCQPSCCHPA (177 aa). Repeat copies occupy residues 50 to 54, 55 to 59, 60 to 64, 86 to 90, 96 to 100, 101 to 105, 111 to 115, 121 to 125, 131 to 135, 136 to 140, 141 to 145, 151 to 155, 161 to 167, 168 to 172, 187 to 191, and 198 to 202.

Belongs to the KRTAP type 10 family. As to quaternary structure, interacts with hair keratins.

In terms of biological role, in the hair cortex, hair keratin intermediate filaments are embedded in an interfilamentous matrix, consisting of hair keratin-associated proteins (KRTAP), which are essential for the formation of a rigid and resistant hair shaft through their extensive disulfide bond cross-linking with abundant cysteine residues of hair keratins. The matrix proteins include the high-sulfur and high-glycine-tyrosine keratins. The sequence is that of Keratin-associated protein 10-8 from Bos taurus (Bovine).